The chain runs to 302 residues: Nucleotide-binding protein Rsph17025_2562 (302 aa).

Residue 15 to 22 coordinates ATP; it reads GPSGAGRT. 62–65 contacts GTP; that stretch reads DVRN.

It belongs to the RapZ-like family.

Displays ATPase and GTPase activities. The polypeptide is Nucleotide-binding protein Rsph17025_2562 (Cereibacter sphaeroides (strain ATCC 17025 / ATH 2.4.3) (Rhodobacter sphaeroides)).